A 539-amino-acid polypeptide reads, in one-letter code: Dihydrolipoyllysine-residue acetyltransferase component 3 of pyruvate dehydrogenase complex, mitochondrial (539 aa).

The transit peptide at 1-102 (MAYASRIINH…SCLMQSARGF (102 aa)) directs the protein to the mitochondrion. One can recognise a Lipoyl-binding domain in the interval 111–187 (HQEIGMPSLS…QVGEVIAITV (77 aa)). Lysine 152 carries the N6-lipoyllysine modification. Residues 195-247 (KFKDYTPSSTADAAPTKAEPTPAPPKEEKVKQPSSPPEPKASKPSTPPTGDRV) form a disordered region. The span at 204–214 (TADAAPTKAEP) shows a compositional bias: low complexity. The region spanning 248-285 (FASPLARKLAEDNNVPLSDIEGTGPEGRIVKADIDEYL) is the Peripheral subunit-binding (PSBD) domain. Catalysis depends on residues histidine 512 and aspartate 516.

This sequence belongs to the 2-oxoacid dehydrogenase family. (R)-lipoate serves as cofactor.

The protein localises to the mitochondrion matrix. It carries out the reaction N(6)-[(R)-dihydrolipoyl]-L-lysyl-[protein] + acetyl-CoA = N(6)-[(R)-S(8)-acetyldihydrolipoyl]-L-lysyl-[protein] + CoA. The pyruvate dehydrogenase complex catalyzes the overall conversion of pyruvate to acetyl-CoA and CO(2). It contains multiple copies of three enzymatic components: pyruvate dehydrogenase (E1), dihydrolipoamide acetyltransferase (E2) and lipoamide dehydrogenase (E3). This is Dihydrolipoyllysine-residue acetyltransferase component 3 of pyruvate dehydrogenase complex, mitochondrial from Arabidopsis thaliana (Mouse-ear cress).